A 120-amino-acid chain; its full sequence is Spermidine export protein MdtJ (120 aa).

A run of 4 helical transmembrane segments spans residues 1–21 (MFYW…TLSM), 31–51 (AGFI…SFAV), 54–74 (IALG…ITIF), and 81–101 (EALS…IVLI).

This sequence belongs to the drug/metabolite transporter (DMT) superfamily. Small multidrug resistance (SMR) (TC 2.A.7.1) family. MdtJ subfamily. In terms of assembly, forms a complex with MdtI.

The protein localises to the cell inner membrane. In terms of biological role, catalyzes the excretion of spermidine. The protein is Spermidine export protein MdtJ of Salmonella choleraesuis (strain SC-B67).